Reading from the N-terminus, the 238-residue chain is Ribosomal RNA small subunit methyltransferase G (238 aa).

S-adenosyl-L-methionine contacts are provided by residues glycine 79, phenylalanine 84, 102–104, 130–131, and arginine 149; these read EAT and IE.

Belongs to the methyltransferase superfamily. RNA methyltransferase RsmG family.

It localises to the cytoplasm. In terms of biological role, specifically methylates the N7 position of a guanine in 16S rRNA. This is Ribosomal RNA small subunit methyltransferase G from Chloroflexus aggregans (strain MD-66 / DSM 9485).